The sequence spans 118 residues: Non-specific lipid-transfer protein 1 (118 aa).

The signal sequence occupies residues Met-1–Ala-25. Disulfide bonds link Cys-29–Cys-76, Cys-39–Cys-53, Cys-54–Cys-100, and Cys-74–Cys-114.

The protein belongs to the plant LTP family. Expressed primarily in epidermal cells.

It is found in the secreted. The protein resides in the cell wall. Plant non-specific lipid-transfer proteins transfer phospholipids as well as galactolipids across membranes. May play a role in wax or cutin deposition in the cell walls of expanding epidermal cells and certain secretory tissues. In Arabidopsis thaliana (Mouse-ear cress), this protein is Non-specific lipid-transfer protein 1 (LTP1).